A 649-amino-acid polypeptide reads, in one-letter code: Serine/threonine kinase-like domain-containing protein STKLD1 (649 aa).

A compositionally biased stretch (basic and acidic residues) spans 1 to 13 (MLGPESDGRRPTQ). The segment at 1-23 (MLGPESDGRRPTQGERGPGYPGE) is disordered. The Protein kinase domain maps to 28-379 (YQVLYQLNPG…CNQAITSAVL (352 aa)). ATP contacts are provided by residues 34–42 (LNPGALGVN) and K57. The interval 621-640 (FSKPGLPPGGSPQPGCTASG) is disordered.

It belongs to the protein kinase superfamily. Ser/Thr protein kinase family. STKL subfamily.

This chain is Serine/threonine kinase-like domain-containing protein STKLD1 (STKLD1), found in Macaca fascicularis (Crab-eating macaque).